Reading from the N-terminus, the 254-residue chain is Undecaprenyl-diphosphatase 3 (254 aa).

8 consecutive transmembrane segments (helical) span residues 8-28 (TEFLPVSSTGHMILTGHLIGF), 33-53 (AKVFEVVIQLGSILAVVVIFW), 74-94 (LHIIIGMIPAGVLGVLFHSAI), 97-117 (VLFGPGPVVISLVAGGILMIV), 133-153 (ITYKQAFTIGMFQCLALWPGF), 174-194 (AEYTFILAVPMMVAASGLDLI), 207-227 (LFATGFITAFVVAMLAIVSFL), and 233-253 (VKLTPFAYYRFILAAVFYFFI).

The protein belongs to the UppP family.

It localises to the cell membrane. The enzyme catalyses di-trans,octa-cis-undecaprenyl diphosphate + H2O = di-trans,octa-cis-undecaprenyl phosphate + phosphate + H(+). Catalyzes the dephosphorylation of undecaprenyl diphosphate (UPP). Confers resistance to bacitracin. The chain is Undecaprenyl-diphosphatase 3 from Bacillus thuringiensis (strain Al Hakam).